The chain runs to 269 residues: Probable cysteine protease avirulence protein AvrPpiC2 (269 aa).

The disordered stretch occupies residues 1–39 (MTIVSGHIGKHPSLTTVQAGSSASVENQMPDPAQFSDGR). The span at 13 to 27 (SLTTVQAGSSASVEN) shows a compositional bias: polar residues. Active-site residues include Cys-72, His-213, and Asp-230.

It belongs to the peptidase C58 family.

Its function is as follows. Potential cysteine protease. Avirulence protein, which may be essential during infection of plant cells from Pea and some Arabidopsis thaliana cultivars. May act by affecting the plant defense system. In plants lacking appropriate resistance (R) gene, it probably impairs the plant defense system and leads to the bacteria multiplication. In contrast, in plants containing the appropriate R protein, it is unable to induce disease symptoms, explaining its avirulence name. In Pseudomonas syringae pv. pisi, this protein is Probable cysteine protease avirulence protein AvrPpiC2 (avrPpiC2).